Reading from the N-terminus, the 572-residue chain is mRNA cap guanine-N(7) methyltransferase (572 aa).

Disordered regions lie at residues 1–75 and 110–140; these read MPED…GSRV and EKAI…FPSS. Composition is skewed to basic and acidic residues over residues 24-39 and 59-69; these read ANDG…RVHD and SADENKDKKYD. Residues 123–140 are compositionally biased toward low complexity; sequence TTTTPSSTTSSSSSFPSS. The region spanning 262–571 is the mRNA cap 0 methyltransferase domain; it reads SPIYKLRNFN…FYVAFVFEKV (310 aa). MRNA is bound at residue 271 to 272; the sequence is NN. Lys275, Cys302, Asp324, Asp366, Gln396, and Tyr401 together coordinate S-adenosyl-L-methionine.

It belongs to the class I-like SAM-binding methyltransferase superfamily. mRNA cap 0 methyltransferase family.

The protein resides in the nucleus. The catalysed reaction is a 5'-end (5'-triphosphoguanosine)-ribonucleoside in mRNA + S-adenosyl-L-methionine = a 5'-end (N(7)-methyl 5'-triphosphoguanosine)-ribonucleoside in mRNA + S-adenosyl-L-homocysteine. Its function is as follows. Responsible for methylating the 5'-cap structure of mRNAs. In Lodderomyces elongisporus (strain ATCC 11503 / CBS 2605 / JCM 1781 / NBRC 1676 / NRRL YB-4239) (Yeast), this protein is mRNA cap guanine-N(7) methyltransferase (ABD1).